We begin with the raw amino-acid sequence, 180 residues long: Dynactin subunit 6 (180 aa).

This sequence belongs to the dynactin subunits 5/6 family. Dynactin subunit 6 subfamily. Subunit of dynactin, a multiprotein complex part of a tripartite complex with dynein and a adapter, such as BICDL1, BICD2 or HOOK3. The dynactin complex is built around ACTR1A/ACTB filament and consists of an actin-related filament composed of a shoulder domain, a pointed end and a barbed end.

Its subcellular location is the cytoplasm. It localises to the cytoskeleton. In terms of biological role, part of the dynactin complex that activates the molecular motor dynein for ultra-processive transport along microtubules. This chain is Dynactin subunit 6 (dnc-6), found in Caenorhabditis elegans.